Here is a 316-residue protein sequence, read N- to C-terminus: Pantothenate kinase (316 aa).

Gly-95 to Ser-102 contributes to the ATP binding site.

This sequence belongs to the prokaryotic pantothenate kinase family.

It localises to the cytoplasm. The catalysed reaction is (R)-pantothenate + ATP = (R)-4'-phosphopantothenate + ADP + H(+). The protein operates within cofactor biosynthesis; coenzyme A biosynthesis; CoA from (R)-pantothenate: step 1/5. The chain is Pantothenate kinase from Erwinia tasmaniensis (strain DSM 17950 / CFBP 7177 / CIP 109463 / NCPPB 4357 / Et1/99).